Consider the following 375-residue polypeptide: Acetylornithine aminotransferase (375 aa).

Pyridoxal 5'-phosphate is bound by residues 102 to 103 (GA) and phenylalanine 129. Arginine 132 contacts N(2)-acetyl-L-ornithine. A pyridoxal 5'-phosphate-binding site is contributed by 214–217 (DEVQ). An N6-(pyridoxal phosphate)lysine modification is found at lysine 243. A N(2)-acetyl-L-ornithine-binding site is contributed by serine 271. Threonine 272 is a pyridoxal 5'-phosphate binding site.

The protein belongs to the class-III pyridoxal-phosphate-dependent aminotransferase family. ArgD subfamily. Homodimer. It depends on pyridoxal 5'-phosphate as a cofactor.

The protein localises to the cytoplasm. It catalyses the reaction N(2)-acetyl-L-ornithine + 2-oxoglutarate = N-acetyl-L-glutamate 5-semialdehyde + L-glutamate. It functions in the pathway amino-acid biosynthesis; L-arginine biosynthesis; N(2)-acetyl-L-ornithine from L-glutamate: step 4/4. The protein is Acetylornithine aminotransferase of Archaeoglobus fulgidus (strain ATCC 49558 / DSM 4304 / JCM 9628 / NBRC 100126 / VC-16).